Reading from the N-terminus, the 75-residue chain is Phi-liotoxin-Lw1a (75 aa).

Positions 1–25 are cleaved as a signal peptide; sequence MNFATKVSLLLLAIAVIVIVEGGEG. The propeptide occupies 26 to 39; that stretch reads DSWFEEHEESDTER. Cystine bridges form between Cys50-Cys62 and Cys56-Cys68.

In terms of tissue distribution, expressed by the venom gland.

It localises to the secreted. In terms of biological role, affects the activity of both ryanodine-sensitive calcium-release channels RyR1 and RyR2 with high potency. At lower concentrations the toxin increases full openings of the RyRs, and at higher concentrations it inhibits full openings and induce openings to subconductance levels and reduces the number of full conductance openings. The different actions may be attributed to the toxins binding at different sites on the RyRs, with binding at a high-affinity site mediating the increase in full openings and the induction of subconductance states evoked upon binding to a lower-affinity site. Insect-selective toxin that provokes a dose-dependent contractile paralysis in crickets and blowfly larvae, followed by death. In Hormurus waigiensis (Australian rainforest scorpion), this protein is Phi-liotoxin-Lw1a.